The sequence spans 466 residues: 3-isopropylmalate dehydratase large subunit (466 aa).

3 residues coordinate [4Fe-4S] cluster: Cys347, Cys407, and Cys410.

The protein belongs to the aconitase/IPM isomerase family. LeuC type 1 subfamily. In terms of assembly, heterodimer of LeuC and LeuD. [4Fe-4S] cluster serves as cofactor.

The enzyme catalyses (2R,3S)-3-isopropylmalate = (2S)-2-isopropylmalate. The protein operates within amino-acid biosynthesis; L-leucine biosynthesis; L-leucine from 3-methyl-2-oxobutanoate: step 2/4. Functionally, catalyzes the isomerization between 2-isopropylmalate and 3-isopropylmalate, via the formation of 2-isopropylmaleate. This is 3-isopropylmalate dehydratase large subunit from Escherichia coli O157:H7.